The following is a 286-amino-acid chain: Protoheme IX farnesyltransferase (286 aa).

The next 8 helical transmembrane spans lie at 14 to 31 (FRLT…YILA), 38 to 58 (WLNL…ANII), 94 to 114 (LFLI…ALIL), 135 to 155 (IAVF…WIAV), 165 to 185 (VLFA…AWVL), 207 to 227 (TATI…LPYL), 228 to 248 (FGMS…LFFF), and 262 to 282 (ALLL…AFVL).

Belongs to the UbiA prenyltransferase family. Protoheme IX farnesyltransferase subfamily.

The protein localises to the cell inner membrane. It catalyses the reaction heme b + (2E,6E)-farnesyl diphosphate + H2O = Fe(II)-heme o + diphosphate. The protein operates within porphyrin-containing compound metabolism; heme O biosynthesis; heme O from protoheme: step 1/1. Its function is as follows. Converts heme B (protoheme IX) to heme O by substitution of the vinyl group on carbon 2 of heme B porphyrin ring with a hydroxyethyl farnesyl side group. In Cytophaga hutchinsonii (strain ATCC 33406 / DSM 1761 / CIP 103989 / NBRC 15051 / NCIMB 9469 / D465), this protein is Protoheme IX farnesyltransferase.